A 298-amino-acid polypeptide reads, in one-letter code: MKIGQIRQSLSGFYDVYADGQMYRTRARGNFRKRRITPLVGDNVEFDAATPQEGYVLNILDRQTQLVRPPVANVDLGIVVTATTEQEFSTNLLDRQLVALAVAGIEPLLYFAKTDLLTDEVYQQRLTLADAYRQIGYQVICERTAFSPAALAAVKTALAGHVAVVMGQTGAGKSTLLNHLQPGLALATGEISQALNRGKHTTRKVSLIPIADGLVADTPGFSSYEVFDIAANELTHYFPEFVRLSVDCKYRGCVHINEPQCAVKQALAAGELLASRYDNYLQFYETIKNKKVIYNKKK.

Residues 63-224 (QTQLVRPPVA…VADTPGFSSY (162 aa)) form the CP-type G domain. Residues 112 to 115 (AKTD) and 167 to 175 (GQTGAGKST) each bind GTP. The Zn(2+) site is built by Cys-248, Cys-253, His-255, and Cys-261.

The protein belongs to the TRAFAC class YlqF/YawG GTPase family. RsgA subfamily. Monomer. Associates with 30S ribosomal subunit, binds 16S rRNA. It depends on Zn(2+) as a cofactor.

It localises to the cytoplasm. Its function is as follows. One of several proteins that assist in the late maturation steps of the functional core of the 30S ribosomal subunit. Helps release RbfA from mature subunits. May play a role in the assembly of ribosomal proteins into the subunit. Circularly permuted GTPase that catalyzes slow GTP hydrolysis, GTPase activity is stimulated by the 30S ribosomal subunit. This Lactiplantibacillus plantarum (strain ATCC BAA-793 / NCIMB 8826 / WCFS1) (Lactobacillus plantarum) protein is Small ribosomal subunit biogenesis GTPase RsgA 1.